We begin with the raw amino-acid sequence, 303 residues long: uncharacterized protein (303 aa).

4 helical membrane-spanning segments follow: residues 102-122 (TYLL…VMAI), 132-152 (FVLF…FLFF), 184-204 (LLYF…SLIY), and 221-241 (FILL…FLLF).

It localises to the membrane. This is an uncharacterized protein from Dictyostelium discoideum (Social amoeba).